Consider the following 386-residue polypeptide: Chaperone protein DnaJ (386 aa).

The region spanning 6–71 is the J domain; the sequence is DYYEILGVDR…QKRARYDQFG (66 aa). The segment at 144-226 adopts a CR-type zinc-finger fold; the sequence is GTEKEVTVSR…CGGKGRVRKH (83 aa). Positions 157, 160, 174, 177, 200, 203, 214, and 217 each coordinate Zn(2+). CXXCXGXG motif repeat units lie at residues 157–164, 174–181, 200–207, and 214–221; these read CPTCSGSG, CRQCNGTG, CDVCHGEG, and CETCGGKG.

The protein belongs to the DnaJ family. Homodimer. The cofactor is Zn(2+).

The protein localises to the cytoplasm. Participates actively in the response to hyperosmotic and heat shock by preventing the aggregation of stress-denatured proteins and by disaggregating proteins, also in an autonomous, DnaK-independent fashion. Unfolded proteins bind initially to DnaJ; upon interaction with the DnaJ-bound protein, DnaK hydrolyzes its bound ATP, resulting in the formation of a stable complex. GrpE releases ADP from DnaK; ATP binding to DnaK triggers the release of the substrate protein, thus completing the reaction cycle. Several rounds of ATP-dependent interactions between DnaJ, DnaK and GrpE are required for fully efficient folding. Also involved, together with DnaK and GrpE, in the DNA replication of plasmids through activation of initiation proteins. The sequence is that of Chaperone protein DnaJ from Acetivibrio thermocellus (strain ATCC 27405 / DSM 1237 / JCM 9322 / NBRC 103400 / NCIMB 10682 / NRRL B-4536 / VPI 7372) (Clostridium thermocellum).